A 39-amino-acid chain; its full sequence is Photosystem II reaction center protein Y (39 aa).

A helical membrane pass occupies residues 4 to 24 (RVIVVVSPLLIAATWAAINIG).

It belongs to the PsbY family. As to quaternary structure, PSII is composed of 1 copy each of membrane proteins PsbA, PsbB, PsbC, PsbD, PsbE, PsbF, PsbH, PsbI, PsbJ, PsbK, PsbL, PsbM, PsbT, PsbX, PsbY, PsbZ, Psb30/Ycf12, peripheral proteins PsbO, CyanoQ (PsbQ), PsbU, PsbV and a large number of cofactors. It forms dimeric complexes.

The protein localises to the cellular thylakoid membrane. Functionally, loosely associated component of the core of photosystem II (PSII), it is not always seen in crystals. PSII is a light-driven water plastoquinone oxidoreductase, using light energy to abstract electrons from H(2)O, generating a proton gradient subsequently used for ATP formation. The chain is Photosystem II reaction center protein Y from Synechocystis sp. (strain ATCC 27184 / PCC 6803 / Kazusa).